The chain runs to 153 residues: UPF0251 protein CT0950 (153 aa).

This sequence belongs to the UPF0251 family.

This is UPF0251 protein CT0950 from Chlorobaculum tepidum (strain ATCC 49652 / DSM 12025 / NBRC 103806 / TLS) (Chlorobium tepidum).